The primary structure comprises 93 residues: Large ribosomal subunit protein bL27 (93 aa).

Positions 1-8 (MIMDLQFF) are excised as a propeptide. Positions 8–29 (FSHHKGGGSTANGRNSAGRRLG) are disordered.

This sequence belongs to the bacterial ribosomal protein bL27 family. The N-terminus is cleaved by ribosomal processing cysteine protease Prp.

The polypeptide is Large ribosomal subunit protein bL27 (Limosilactobacillus fermentum (strain NBRC 3956 / LMG 18251) (Lactobacillus fermentum)).